The sequence spans 290 residues: Ribonuclease HIII (290 aa).

The RNase H type-2 domain occupies 78–290 (LPLIGTDEVG…FKNTEKAKNA (213 aa)). Residues Asp-84, Glu-85, and Asp-187 each coordinate a divalent metal cation.

This sequence belongs to the RNase HII family. RnhC subfamily. Requires Mn(2+) as cofactor. Mg(2+) serves as cofactor.

Its subcellular location is the cytoplasm. The enzyme catalyses Endonucleolytic cleavage to 5'-phosphomonoester.. Its function is as follows. Endonuclease that specifically degrades the RNA of RNA-DNA hybrids. This is Ribonuclease HIII from Streptococcus pneumoniae (strain P1031).